A 92-amino-acid chain; its full sequence is Small ribosomal subunit protein bS18 (92 aa).

The protein belongs to the bacterial ribosomal protein bS18 family. Part of the 30S ribosomal subunit. Forms a tight heterodimer with protein bS6.

Functionally, binds as a heterodimer with protein bS6 to the central domain of the 16S rRNA, where it helps stabilize the platform of the 30S subunit. The chain is Small ribosomal subunit protein bS18 from Ralstonia nicotianae (strain ATCC BAA-1114 / GMI1000) (Ralstonia solanacearum).